A 353-amino-acid polypeptide reads, in one-letter code: Rhodopsin (353 aa).

Over methionine 1 to alanine 36 the chain is Extracellular. N-linked (GlcNAc...) asparagine glycans are attached at residues asparagine 2 and asparagine 15. The helical transmembrane segment at tyrosine 37–valine 61 threads the bilayer. Residues threonine 62–asparagine 73 are Cytoplasmic-facing. Residues tyrosine 74 to tyrosine 96 form a helical membrane-spanning segment. At threonine 97–cysteine 110 the chain is on the extracellular side. An intrachain disulfide couples cysteine 110 to cysteine 187. The chain crosses the membrane as a helical span at residues asparagine 111–valine 133. A 'Ionic lock' involved in activated form stabilization motif is present at residues glutamate 134 to tryptophan 136. At glutamate 134 to histidine 152 the chain is on the cytoplasmic side. A helical membrane pass occupies residues alanine 153 to valine 173. The Extracellular portion of the chain corresponds to glycine 174 to serine 202. Asparagine 200 carries N-linked (GlcNAc...) asparagine glycosylation. The chain crosses the membrane as a helical span at residues phenylalanine 203–glycine 224. The Cytoplasmic segment spans residues arginine 225–arginine 252. A helical membrane pass occupies residues methionine 253–tyrosine 274. Over isoleucine 275 to leucine 286 the chain is Extracellular. A helical membrane pass occupies residues phenylalanine 287–cysteine 308. N6-(retinylidene)lysine is present on lysine 296. At methionine 309–alanine 353 the chain is on the cytoplasmic side. Residues cysteine 322 and cysteine 323 are each lipidated (S-palmitoyl cysteine). A disordered region spans residues glutamate 330–alanine 353. The segment covering alanine 334–alanine 353 has biased composition (low complexity).

It belongs to the G-protein coupled receptor 1 family. Opsin subfamily. Post-translationally, phosphorylated on some or all of the serine and threonine residues present in the C-terminal region. Contains one covalently linked retinal chromophore.

The protein localises to the membrane. Its subcellular location is the cell projection. The protein resides in the cilium. It is found in the photoreceptor outer segment. In terms of biological role, photoreceptor required for image-forming vision at low light intensity. While most salt water fish species use retinal as chromophore, most freshwater fish use 3-dehydroretinal, or a mixture of retinal and 3-dehydroretinal. Light-induced isomerization of 11-cis to all-trans retinal triggers a conformational change that activates signaling via G-proteins. Subsequent receptor phosphorylation mediates displacement of the bound G-protein alpha subunit by arrestin and terminates signaling. The protein is Rhodopsin (rho) of Mugil cephalus (Flathead mullet).